A 932-amino-acid chain; its full sequence is MAWTEKDVENGKESDSLGNNGFLKGVQSSSDSKGSPVRISPVKKSFEGKDAITYANILRSRNKFVDALAIYESVLQKDSGSIESLIGKGICLQMQNMGRLAFESFAEAIKLDPQNACALTHCGILYKDEGRLVEAAESYQKALKADPSYKPAAECLAIVLTDIGTSLKLAGNSQEGIQKYYEAIKIDSHYAPAYYNLGVVYSEMMQYDMALNCYEKAAIERPMYAEAYCNMGVIYKNRGDLESAIACYERCLAVSPNFEIAKNNMAIALTDLGTKVKLEGDINQGVAYYKKALYYNWHYADAMYNLGVAYGEMLKFDMAIVFYELAFHFNPHCAEACNNLGVIYKDRDNLDKAVECYQMALTIKPNFSQSLNNLGVVYTVQGKMDAAASMIEKAIIANPTYAEAYNNLGVLYRDAGNISLAIEAYEQCLKIDPDSRNAGQNRLLAMNYINEGSDDKLYEAHRDWGWRFMRLYQQYNSWDNSKDPERQLVIGYVSPDYFTHSVSYFIEAPLAYHDYANYKVVIYSAVVKADAKTNRFRDKVLKKGGVWRDIYGIDEKKVSSMIREDKVDIMIELTGHTANNKLGMMACRPAPVQVTWIGYPNTTGLPTIDYRITDSMADPPSTKQKHVEELVRLPDSFLCYTPSPEAGPVSPAPALTNGFVTFGSFNNLAKITPKVLQVWARILCAVPHSRLIVKCKPFGCDSVRQRFLSILEQLGLEPQRVDLVPLILLNHDHMQAYSLMDISLDTFPYAGTTTTCESLYMGVPCVTMGGSVHAHNVGVSLLKTVGLRKLVARNEDEYVELAIQLASDVTSLSNLRMSLRELMAKSPLCDGAQFTQNLESTYRSMWRRYCDGDVPSLRRMELLQQQQQTLAELVVPEESPVSPIEKTRISASKDGPIKENGFTVSPALVYNSSTIEENGVQLNQAGNPGKQS.

Positions 1–15 are enriched in basic and acidic residues; sequence MAWTEKDVENGKESD. Residues 1-39 are disordered; it reads MAWTEKDVENGKESDSLGNNGFLKGVQSSSDSKGSPVRI. TPR repeat units lie at residues 48-81, 82-115, 116-149, 157-190, 191-224, 225-258, 266-299, 300-333, 334-367, 369-401, and 402-435; these read GKDA…DSGS, IESL…DPQN, ACAL…DPSY, AIVL…DSHY, APAY…RPMY, AEAY…SPNF, AIAL…NWHY, ADAM…NPHC, AEAC…KPNF, QSLN…NPTY, and AEAY…DPDS. The interval 436-932 is catalytic region; sequence RNAGQNRLLA…NQAGNPGKQS (497 aa). Residues 881 to 902 form a disordered region; it reads VSPIEKTRISASKDGPIKENGF.

It belongs to the glycosyltransferase 41 family. O-GlcNAc transferase subfamily. Expressed in stems, leaves and flowers. Expressed during all stages of corolla maturation.

The protein resides in the nucleus. It catalyses the reaction L-seryl-[protein] + UDP-N-acetyl-alpha-D-glucosamine = 3-O-(N-acetyl-beta-D-glucosaminyl)-L-seryl-[protein] + UDP + H(+). The enzyme catalyses L-threonyl-[protein] + UDP-N-acetyl-alpha-D-glucosamine = 3-O-(N-acetyl-beta-D-glucosaminyl)-L-threonyl-[protein] + UDP + H(+). Its pathway is protein modification; protein glycosylation. Its function is as follows. Probable O-linked N-acetylglucosamine transferase (OGT) involved in various processes such as gibberellin (GA) signaling pathway. OGTs catalyze the addition of nucleotide-activated sugars directly onto the polypeptide through O-glycosidic linkage with the hydroxyl of serine or threonine. Probably acts by adding O-linked sugars to yet unknown proteins. The sequence is that of Probable UDP-N-acetylglucosamine--peptide N-acetylglucosaminyltransferase SPINDLY (SPY) from Petunia hybrida (Petunia).